Here is a 667-residue protein sequence, read N- to C-terminus: MIENEEFKNLNDHWRNTIEKLSIYKDISEQTLERCDESFIETKKKICQDFDTIINYLTDRKIELLQQLGEELEAHKQQIESNRDKSMMLIEQLNKKMNSPSKFDININSSGGGGSGGVVFSGGGGGGLSHSTSYSGNLSNYLSASSGFASSPLNYSTSSLMVTNNNNNNPMTSPLKKSTSFQTDYLQVLKESISYIEWDWKDEFQENNTTNRKIIKQPKPISSMASDLILNSSFKSFDDLNKKFQEFSNNNDDTDDYDNNNNNNNDNKDDFDNCENNNNGDSLKMKSNKKLKIFGKLKFKIIETLEYKRLNSNLEDTKCIYSIGGKCKDGFDQYSIEKFDFKQGLWRSLQSIPSIMDNDFTGNFDGKNHIYLFGGSLQPTRILKYNLLEDQWEIIETNNNNNNNNNGANGANGNIEIPDNGRFLHCSVFDGKQNIYLIGGFPRSTSILKFNIITEQFSKQQSKSTTSSRNLWSMGAIYKEDNNSIYLIGGCNITRQSVDTLERYDIDNDSFTTLSPLPVSCYGAGVFYDDQEHYIYVLGGYNSKENKCLSIIQRYDLLDNSWSVLTNNHDDDDDDDGDSGGGLQNLLLPKPMMINGNSIIFDSSKRIVHILGGYNNVTKESIDDIYTLDISNILDENLSNKINWEVNKIPQFKNSKFKGGTSILVQK.

Positions 58–98 (TDRKIELLQQLGEELEAHKQQIESNRDKSMMLIEQLNKKMN) form a coiled coil. Residues 248 to 281 (SNNNDDTDDYDNNNNNNNDNKDDFDNCENNNNGD) are disordered. Kelch repeat units follow at residues 319–366 (CIYS…NFDG), 369–412 (HIYL…NGAN), 434–480 (NIYL…IYKE), 484–531 (SIYL…YDDQ), 534–582 (YIYV…SGGG), and 607–654 (IVHI…QFKN).

The protein is Kelch repeat-containing protein DDB_G0274267 of Dictyostelium discoideum (Social amoeba).